The following is a 652-amino-acid chain: Large subunit GTPase 1 homolog (652 aa).

Phosphoserine is present on S93. The region spanning 164 to 438 (WRQLWRVIER…LCDCPGLVMP (275 aa)) is the CP-type G domain. Residue 212–215 (NKAD) coordinates GTP. S252 carries the post-translational modification Phosphoserine. The disordered stretch occupies residues 288 to 347 (LGEAASSEEDESEYEDCQEEEEDWQTCLEDSSSSDEEACGQDCKEGHTVDSEAQGRNTPQ). Residues 293–311 (SSEEDESEYEDCQEEEEDW) are compositionally biased toward acidic residues. GTP is bound by residues 387–394 (GYPNVGKS) and 431–434 (DCPG). The interval 625–652 (RGAGKPWKKHGNRNKKEKSRRLYKHLDM) is disordered. Over residues 630–652 (PWKKHGNRNKKEKSRRLYKHLDM) the composition is skewed to basic residues.

Belongs to the TRAFAC class YlqF/YawG GTPase family. LSG1 subfamily.

The protein resides in the cytoplasm. It localises to the endoplasmic reticulum. The protein localises to the nucleus. Its subcellular location is the cajal body. It carries out the reaction GTP + H2O = GDP + phosphate + H(+). Functions as a GTPase. May act by mediating the release of NMD3 from the 60S ribosomal subunit after export into the cytoplasm during the 60S ribosomal subunit maturation. The protein is Large subunit GTPase 1 homolog of Bos taurus (Bovine).